Here is a 249-residue protein sequence, read N- to C-terminus: 2,3-bisphosphoglycerate-dependent phosphoglycerate mutase (249 aa).

Substrate is bound by residues 9 to 16, 22 to 23, arginine 61, 88 to 91, lysine 99, 115 to 116, and 184 to 185; these read RHGQSQWN, TG, ERHY, RR, and GN. Histidine 10 acts as the Tele-phosphohistidine intermediate in catalysis. The Proton donor/acceptor role is filled by glutamate 88.

Belongs to the phosphoglycerate mutase family. BPG-dependent PGAM subfamily. Homodimer.

It carries out the reaction (2R)-2-phosphoglycerate = (2R)-3-phosphoglycerate. Its pathway is carbohydrate degradation; glycolysis; pyruvate from D-glyceraldehyde 3-phosphate: step 3/5. Its function is as follows. Catalyzes the interconversion of 2-phosphoglycerate and 3-phosphoglycerate. This chain is 2,3-bisphosphoglycerate-dependent phosphoglycerate mutase, found in Xanthomonas axonopodis pv. citri (strain 306).